Here is a 399-residue protein sequence, read N- to C-terminus: Elongation factor Tu (399 aa).

The tr-type G domain maps to 10 to 207; it reads KPHMNVGTIG…AMDTYFPDPV (198 aa). Residues 19–26 form a G1 region; sequence GQIDHGKT. 19–26 serves as a coordination point for GTP; that stretch reads GQIDHGKT. Threonine 26 contributes to the Mg(2+) binding site. Residues 60 to 64 are G2; the sequence is GITIN. A G3 region spans residues 81–84; sequence DCPG. Residues 81-85 and 136-139 contribute to the GTP site; these read DCPGH and NKVD. The tract at residues 136–139 is G4; sequence NKVD. The interval 173 to 175 is G5; it reads SAL.

Belongs to the TRAFAC class translation factor GTPase superfamily. Classic translation factor GTPase family. EF-Tu/EF-1A subfamily. Monomer.

It is found in the cytoplasm. The catalysed reaction is GTP + H2O = GDP + phosphate + H(+). GTP hydrolase that promotes the GTP-dependent binding of aminoacyl-tRNA to the A-site of ribosomes during protein biosynthesis. This Fervidobacterium islandicum protein is Elongation factor Tu.